The sequence spans 186 residues: NADH dehydrogenase [ubiquinone] 1 beta subcomplex subunit 8, mitochondrial (186 aa).

Residues 1–28 (MAVARAGVLGVQWLQRASRNVMPLGART) constitute a mitochondrion transit peptide. Residues 133–153 (LFGFLAFMIFMCWVGDVYPVY) form a helical membrane-spanning segment.

This sequence belongs to the complex I NDUFB8 subunit family. As to quaternary structure, complex I is composed of 45 different subunits.

It localises to the mitochondrion inner membrane. Its function is as follows. Accessory subunit of the mitochondrial membrane respiratory chain NADH dehydrogenase (Complex I), that is believed not to be involved in catalysis. Complex I functions in the transfer of electrons from NADH to the respiratory chain. The immediate electron acceptor for the enzyme is believed to be ubiquinone. In Homo sapiens (Human), this protein is NADH dehydrogenase [ubiquinone] 1 beta subcomplex subunit 8, mitochondrial (NDUFB8).